Here is a 248-residue protein sequence, read N- to C-terminus: Homeobox protein CHOX-CAD (248 aa).

Residues 137 to 196 (KDKYRVVYTDHQRLELEKEFHYSRYITIRRKAELAAALGLTERQVKIWFQNRRAKERKVN) constitute a DNA-binding region (homeobox). Residues 192 to 248 (ERKVNKKKLQQQSQPTSTTTPTPPAVGTPGPMGTLCSGSAPSLVSSSPLTIKEEFMP) are disordered. Low complexity-rich tracts occupy residues 201-211 (QQQSQPTSTTT) and 228-240 (SGSA…SSPL).

This sequence belongs to the Caudal homeobox family.

The protein resides in the nucleus. May play an important role during the early steps of organogenesis. The polypeptide is Homeobox protein CHOX-CAD (CHOX-CAD1) (Gallus gallus (Chicken)).